Reading from the N-terminus, the 63-residue chain is Large ribosomal subunit protein uL29 (63 aa).

Belongs to the universal ribosomal protein uL29 family.

This Marinomonas sp. (strain MWYL1) protein is Large ribosomal subunit protein uL29.